Here is a 149-residue protein sequence, read N- to C-terminus: Nucleoside diphosphate kinase (149 aa).

K9, F57, R85, T91, R102, and N112 together coordinate ATP. H115 functions as the Pros-phosphohistidine intermediate in the catalytic mechanism.

This sequence belongs to the NDK family. In terms of assembly, homotetramer. The cofactor is Mg(2+).

The protein localises to the cytoplasm. The enzyme catalyses a 2'-deoxyribonucleoside 5'-diphosphate + ATP = a 2'-deoxyribonucleoside 5'-triphosphate + ADP. The catalysed reaction is a ribonucleoside 5'-diphosphate + ATP = a ribonucleoside 5'-triphosphate + ADP. In terms of biological role, major role in the synthesis of nucleoside triphosphates other than ATP. The ATP gamma phosphate is transferred to the NDP beta phosphate via a ping-pong mechanism, using a phosphorylated active-site intermediate. The sequence is that of Nucleoside diphosphate kinase from Crocosphaera subtropica (strain ATCC 51142 / BH68) (Cyanothece sp. (strain ATCC 51142)).